The chain runs to 568 residues: AT-rich interactive domain-containing protein 3B (568 aa).

Methionine 1 is subject to N-acetylmethionine. A compositionally biased stretch (low complexity) spans 1 to 22 (MEPLQQQQQQQQQKQPQQPLLQ). Positions 1–174 (MEPLQQQQQQ…SVPTAGQPSW (174 aa)) are disordered. At serine 87 the chain carries Phosphoserine. The span at 88–107 (EPEEEEGGLEDEDGDDDVAE) shows a compositional bias: acidic residues. Residues 151–160 (TKEDHTKDAS) are compositionally biased toward basic and acidic residues. Positions 201–374 (SRDFAKLYEL…SSPKIRFSIL (174 aa)) are interaction with RB1. Residues 213 to 305 (DPERKEFLDD…YLYAYECEKK (93 aa)) enclose the ARID domain. Serine 309 is subject to Phosphoserine. Arginine 370 is modified (asymmetric dimethylarginine). Positions 378 to 403 (SSSGTSASSPRIPPASTLRKGDGVPV) are disordered. In terms of domain architecture, REKLES spans 425 to 522 (GPLEHLRERL…GVLFAQKPVV (98 aa)). The segment at 495-518 (SNIGSINMSVDIDGTTYTGVLFAQ) is interaction with ARID3A. Low complexity predominate over residues 529–559 (TPQSIGSSASSSNSSSSHCSPSPTSSRGTPS). Residues 529-568 (TPQSIGSSASSSNSSSSHCSPSPTSSRGTPSAEPSTSWSL) form a disordered region.

As to quaternary structure, heterodimer with ARID3A. Interacts with unphosphorylated RB1. In terms of tissue distribution, expressed at high levels in testis. Also expressed in prostate, thyroid and thymus.

Its subcellular location is the nucleus. Functionally, transcription factor involved in the production of cranial mesenchymal tissues. Favors nuclear targeting of ARID3A. The protein is AT-rich interactive domain-containing protein 3B (Arid3b) of Mus musculus (Mouse).